The primary structure comprises 257 residues: Thiazole synthase (257 aa).

The Schiff-base intermediate with DXP role is filled by lysine 95. 1-deoxy-D-xylulose 5-phosphate contacts are provided by residues glycine 156, 182–183 (AG), and 204–205 (NT).

This sequence belongs to the ThiG family. In terms of assembly, homotetramer. Forms heterodimers with either ThiH or ThiS.

The protein localises to the cytoplasm. It catalyses the reaction [ThiS sulfur-carrier protein]-C-terminal-Gly-aminoethanethioate + 2-iminoacetate + 1-deoxy-D-xylulose 5-phosphate = [ThiS sulfur-carrier protein]-C-terminal Gly-Gly + 2-[(2R,5Z)-2-carboxy-4-methylthiazol-5(2H)-ylidene]ethyl phosphate + 2 H2O + H(+). The protein operates within cofactor biosynthesis; thiamine diphosphate biosynthesis. Catalyzes the rearrangement of 1-deoxy-D-xylulose 5-phosphate (DXP) to produce the thiazole phosphate moiety of thiamine. Sulfur is provided by the thiocarboxylate moiety of the carrier protein ThiS. In vitro, sulfur can be provided by H(2)S. This chain is Thiazole synthase, found in Fusobacterium nucleatum subsp. nucleatum (strain ATCC 25586 / DSM 15643 / BCRC 10681 / CIP 101130 / JCM 8532 / KCTC 2640 / LMG 13131 / VPI 4355).